Here is a 440-residue protein sequence, read N- to C-terminus: Aspartokinase (440 aa).

The protein belongs to the aspartokinase family.

The enzyme catalyses L-aspartate + ATP = 4-phospho-L-aspartate + ADP. Its pathway is amino-acid biosynthesis; L-lysine biosynthesis via DAP pathway; (S)-tetrahydrodipicolinate from L-aspartate: step 1/4. It participates in amino-acid biosynthesis; L-methionine biosynthesis via de novo pathway; L-homoserine from L-aspartate: step 1/3. It functions in the pathway amino-acid biosynthesis; L-threonine biosynthesis; L-threonine from L-aspartate: step 1/5. This chain is Aspartokinase (lysC), found in Chlamydia pneumoniae (Chlamydophila pneumoniae).